A 78-amino-acid polypeptide reads, in one-letter code: Large ribosomal subunit protein bL28 (78 aa).

Residues 1-20 (MSQVCQVTGKRPVVGNNRSH) are disordered.

Belongs to the bacterial ribosomal protein bL28 family.

The sequence is that of Large ribosomal subunit protein bL28 from Idiomarina loihiensis (strain ATCC BAA-735 / DSM 15497 / L2-TR).